We begin with the raw amino-acid sequence, 88 residues long: Small ribosomal subunit protein uS17 (88 aa).

This sequence belongs to the universal ribosomal protein uS17 family. In terms of assembly, part of the 30S ribosomal subunit.

Its function is as follows. One of the primary rRNA binding proteins, it binds specifically to the 5'-end of 16S ribosomal RNA. The protein is Small ribosomal subunit protein uS17 of Pseudomonas aeruginosa (strain LESB58).